A 301-amino-acid chain; its full sequence is Pantothenate synthetase (301 aa).

ATP is bound at residue 30-37; sequence MGNLHEGH. Residue H37 is the Proton donor of the active site. Q61 provides a ligand contact to (R)-pantoate. A beta-alanine-binding site is contributed by Q61. Position 149 to 152 (149 to 152) interacts with ATP; it reads GEKD. (R)-pantoate is bound at residue Q155. Residues V178 and 186 to 189 contribute to the ATP site; that span reads MSSR.

It belongs to the pantothenate synthetase family. As to quaternary structure, homodimer.

The protein resides in the cytoplasm. The enzyme catalyses (R)-pantoate + beta-alanine + ATP = (R)-pantothenate + AMP + diphosphate + H(+). The protein operates within cofactor biosynthesis; (R)-pantothenate biosynthesis; (R)-pantothenate from (R)-pantoate and beta-alanine: step 1/1. Catalyzes the condensation of pantoate with beta-alanine in an ATP-dependent reaction via a pantoyl-adenylate intermediate. This Vibrio vulnificus (strain CMCP6) protein is Pantothenate synthetase.